A 724-amino-acid chain; its full sequence is uncharacterized protein (724 aa).

This is an uncharacterized protein from Treponema pallidum (strain Nichols).